We begin with the raw amino-acid sequence, 131 residues long: Small ribosomal subunit protein uS11 (131 aa).

It belongs to the universal ribosomal protein uS11 family. Part of the 30S ribosomal subunit. Interacts with proteins S7 and S18. Binds to IF-3.

Located on the platform of the 30S subunit, it bridges several disparate RNA helices of the 16S rRNA. Forms part of the Shine-Dalgarno cleft in the 70S ribosome. The protein is Small ribosomal subunit protein uS11 of Geobacter sulfurreducens (strain ATCC 51573 / DSM 12127 / PCA).